The chain runs to 289 residues: CRISPR system Cms protein Csm4 (289 aa).

This sequence belongs to the CRISPR-associated Csm4 family. Probably part of the Csm effector complex, that includes Cas10, Csm2, Csm3, Csm4, Csm5 and mature crRNA. Interacts with Cas10 (csm1).

Functionally, CRISPR (clustered regularly interspaced short palindromic repeat) is an adaptive immune system that provides protection against mobile genetic elements (viruses, transposable elements and conjugative plasmids). CRISPR clusters contain spacers, sequences complementary to antecedent mobile elements, and target invading nucleic acids. CRISPR clusters are transcribed and processed into CRISPR RNA (crRNA). The type III-A Csm effector complex binds crRNA and acts as a crRNA-guided RNase, DNase and cyclic oligoadenylate synthase; binding of target RNA cognate to the crRNA is required for all activities. The subunit probably binds to the 5' handle of the crRNA, helping in discrimination between self- and non-self. This chain is CRISPR system Cms protein Csm4, found in Thermococcus onnurineus (strain NA1).